The following is a 226-amino-acid chain: Large ribosomal subunit protein uL1 (226 aa).

The protein belongs to the universal ribosomal protein uL1 family. In terms of assembly, part of the 50S ribosomal subunit.

Functionally, binds directly to 23S rRNA. The L1 stalk is quite mobile in the ribosome, and is involved in E site tRNA release. Protein L1 is also a translational repressor protein, it controls the translation of the L11 operon by binding to its mRNA. The sequence is that of Large ribosomal subunit protein uL1 from Treponema denticola (strain ATCC 35405 / DSM 14222 / CIP 103919 / JCM 8153 / KCTC 15104).